The chain runs to 3625 residues: Cubilin (3625 aa).

The N-terminal stretch at 1 to 20 is a signal peptide; it reads MVNNMSLLFLWSLVIFLTFA. The propeptide at 21–36 is removed in mature form; it reads ESYGEAGGPELQRHKR. An interaction with AMN region spans residues 43–50; it reads PRMAAERG. N106 is a glycosylation site (N-linked (GlcNAc...) asparagine). Residues 133 to 169 form the EGF-like 1 domain; sequence DGKVCSSNPCQNGATCLNLHDSFFCICPSQWKGPLCS. 6 disulfides stabilise this stretch: C137-C148, C142-C157, C159-C168, C175-C191, C185-C200, and C202-C211. One can recognise an EGF-like 2; calcium-binding domain in the interval 171-212; sequence DVNECEIYSGTPLGCQNGATCINTPGSYSCLCSPETHGPQCA. An N-linked (GlcNAc...) asparagine glycan is attached at N257. Residues 264-305 enclose the EGF-like 3; calcium-binding domain; that stretch reads DRDECSSWPAPCSALVPCFNTLGSFYCGACPTGWQGNGYICE. Intrachain disulfides connect C268–C281, C275–C290, C293–C304, C310–C325, C317–C334, C337–C348, C354–C367, C361–C377, C379–C393, C400–C410, C405–C419, C421–C430, C437–C448, C442–C457, C459–C468, C475–C501, C528–C550, C591–C617, C644–C666, and C709–C734. An EGF-like 4; calcium-binding domain is found at 306-349; sequence DINECEINNGGCSVAPPVECVNTPGSYYCPSCPPGYQGDGRMCT. EGF-like domains follow at residues 350-394 and 396-431; these read LIDL…HGCV and LSNV…MNCT. A glycan (N-linked (GlcNAc...) asparagine) is linked at N429. The EGF-like 7; calcium-binding domain occupies 433–469; it reads NINECLSNPCLNGGTCVDGINAFSCECTRFWTGSLCH. CUB domains follow at residues 475-587, 591-703, 709-816, 817-928, 932-1042, 1045-1163, 1167-1279, 1280-1391, 1393-1508, 1512-1621, 1622-1736, 1740-1852, 1854-1965, 1980-2093, 2094-2215, 2219-2336, 2338-2450, 2454-2567, 2572-2689, 2691-2803, 2807-2921, 2922-3037, 3039-3152, 3159-3276, 3280-3397, 3397-3509, and 3513-3625; these read CGGT…WETR, CGGV…YLTT, CGGN…YQVA, CGGE…FSTE, CGEI…YEAT, SAGN…WDGS, CGGN…YQQT, CDNV…WLVH, CGGE…WRAV, CGGI…FRQA, CGGH…YVAS, CGGI…FNNI, GNDH…WFAM, CGGF…FHKS, CGGY…YEAK, CGGN…YSIA, CGGT…FDSS, CGGD…YTSS, CGGS…YSFT, CGGI…WNTE, CGGI…FLSR, CGRN…YRIT, CGGT…FRET, CGGY…YTLL, CGGT…IAGC, CSRE…WTSS, and CGGT…TWAS. N-linked (GlcNAc...) asparagine glycosylation is found at N712 and N749. C761 and C779 are joined by a disulfide. N781 is a glycosylation site (N-linked (GlcNAc...) asparagine). A disulfide bridge connects residues C817 and C842. N857 carries N-linked (GlcNAc...) asparagine glycosylation. Disulfide bonds link C869–C891 and C932–C958. A glycan (N-linked (GlcNAc...) asparagine) is linked at N957. E980 is a binding site for Ca(2+). An N-linked (GlcNAc...) asparagine glycan is attached at N984. Residues C985 and C1005 are joined by a disulfide bond. The Ca(2+) site is built by D988, D1027, D1029, and L1030. Residue N1048 is glycosylated (N-linked (GlcNAc...) asparagine). Positions 1097, 1107, and 1148 each coordinate Ca(2+). A disulfide bridge links C1104 with C1126. C1167 and C1193 form a disulfide bridge. A glycan (N-linked (GlcNAc...) asparagine) is linked at N1170. E1215 contributes to the Ca(2+) binding site. An N-linked (GlcNAc...) asparagine glycan is attached at N1219. A disulfide bond links C1220 and C1242. Residues D1223, D1264, G1266, and Q1267 each contribute to the Ca(2+) site. A disulfide bond links C1280 and C1308. N-linked (GlcNAc...) asparagine glycans are attached at residues N1287, N1309, and N1321. E1330 provides a ligand contact to Ca(2+). N-linked (GlcNAc...) asparagine glycosylation is present at N1334. C1335 and C1353 are disulfide-bonded. Ca(2+) is bound by residues D1338, D1375, and V1377. Intrachain disulfides connect C1393-C1419 and C1446-C1468. N1502 carries N-linked (GlcNAc...) asparagine glycosylation. An intrachain disulfide couples C1512 to C1538. N1553 carries an N-linked (GlcNAc...) asparagine glycan. Cystine bridges form between C1565–C1583, C1622–C1649, C1677–C1699, C1740–C1766, and C1793–C1814. A glycan (N-linked (GlcNAc...) asparagine) is linked at N1648. N-linked (GlcNAc...) asparagine glycans are attached at residues N1804, N1821, and N1887. Intrachain disulfides connect C1907-C1929, C1980-C2008, and C2034-C2056. Residues N2087 and N2119 are each glycosylated (N-linked (GlcNAc...) asparagine). Disulfide bonds link C2094/C2120 and C2219/C2249. N2276 carries N-linked (GlcNAc...) asparagine glycosylation. 2 disulfides stabilise this stretch: C2277/C2299 and C2338/C2365. N-linked (GlcNAc...) asparagine glycosylation is found at N2388 and N2402. Cystine bridges form between C2392–C2413, C2454–C2480, and C2507–C2529. N-linked (GlcNAc...) asparagine glycans are attached at residues N2533, N2583, N2594, and N2612. A disulfide bond links C2572 and C2601. Disulfide bonds link C2630–C2651, C2691–C2717, C2744–C2766, C2807–C2833, and C2862–C2885. N2887, N2925, N2928, and N2947 each carry an N-linked (GlcNAc...) asparagine glycan. 2 disulfides stabilise this stretch: C2922–C2948 and C2979–C3001. Position 3010 is a phosphothreonine (T3010). 2 disulfide bridges follow: C3039-C3066 and C3093-C3115. N-linked (GlcNAc...) asparagine glycosylation is found at N3044, N3105, and N3127. Cystine bridges form between C3159–C3187 and C3217–C3239. N-linked (GlcNAc...) asparagine glycans are attached at residues N3270 and N3285. Disulfide bonds link C3280–C3308 and C3334–C3356. N-linked (GlcNAc...) asparagine glycosylation is present at N3359. C3397 and C3423 are oxidised to a cystine. N-linked (GlcNAc...) asparagine glycosylation is found at N3432, N3459, and N3535. Intrachain disulfides connect C3450-C3472, C3513-C3539, and C3566-C3588.

In terms of assembly, interacts with AMN. Component of the cubam complex composed of one CUBN trimer and one AMN chain. The cubam complex can dimerize. Interacts with LRP2 in a dual-receptor complex in a calcium-dependent manner. Found in a complex with PID1/PCLI1, LRP1 and CUBNI. Interacts with LRP1 and PID1/PCLI1. The precursor is cleaved by a trans-Golgi proteinase furin, removing a propeptide. In terms of processing, N-glycosylated. Detected in kidney cortex (at protein level).

The protein localises to the apical cell membrane. It localises to the cell membrane. The protein resides in the membrane. Its subcellular location is the coated pit. It is found in the endosome. The protein localises to the lysosome membrane. In terms of biological role, endocytic receptor which plays a role in lipoprotein, vitamin and iron metabolism by facilitating their uptake. Acts together with LRP2 to mediate endocytosis of high-density lipoproteins, GC, hemoglobin, ALB, TF and SCGB1A1. Acts together with AMN to mediate endocytosis of the CBLIF-cobalamin complex. Binds to ALB, MB, Kappa and lambda-light chains, TF, hemoglobin, GC, SCGB1A1, APOA1, high density lipoprotein, and the CBLIF-cobalamin complex. Ligand binding requires calcium. Serves as important transporter in several absorptive epithelia, including intestine, renal proximal tubules and embryonic yolk sac. May play an important role in the development of the peri-implantation embryo through internalization of APOA1 and cholesterol. Binds to LGALS3 at the maternal-fetal interface. In Sus scrofa (Pig), this protein is Cubilin (CUBN).